Reading from the N-terminus, the 508-residue chain is Photosystem II CP47 reaction center protein (508 aa).

6 helical membrane-spanning segments follow: residues 21-36 (AVHI…WAGS), 101-115 (IVFS…IWHW), 140-156 (GIHL…FGAF), 203-218 (IAAG…FHLS), 237-252 (VLSS…AFVV), and 457-472 (TFAL…HGAR).

Belongs to the PsbB/PsbC family. PsbB subfamily. In terms of assembly, PSII is composed of 1 copy each of membrane proteins PsbA, PsbB, PsbC, PsbD, PsbE, PsbF, PsbH, PsbI, PsbJ, PsbK, PsbL, PsbM, PsbT, PsbX, PsbY, PsbZ, Psb30/Ycf12, at least 3 peripheral proteins of the oxygen-evolving complex and a large number of cofactors. It forms dimeric complexes. Binds multiple chlorophylls. PSII binds additional chlorophylls, carotenoids and specific lipids. is required as a cofactor.

It is found in the plastid. Its subcellular location is the chloroplast thylakoid membrane. Its function is as follows. One of the components of the core complex of photosystem II (PSII). It binds chlorophyll and helps catalyze the primary light-induced photochemical processes of PSII. PSII is a light-driven water:plastoquinone oxidoreductase, using light energy to abstract electrons from H(2)O, generating O(2) and a proton gradient subsequently used for ATP formation. This is Photosystem II CP47 reaction center protein from Hordeum vulgare (Barley).